Here is a 291-residue protein sequence, read N- to C-terminus: Ribosomal RNA small subunit methyltransferase A (291 aa).

S-adenosyl-L-methionine-binding residues include His21, Leu23, Gly48, Glu70, Asp95, and Asn115.

This sequence belongs to the class I-like SAM-binding methyltransferase superfamily. rRNA adenine N(6)-methyltransferase family. RsmA subfamily.

It is found in the cytoplasm. It carries out the reaction adenosine(1518)/adenosine(1519) in 16S rRNA + 4 S-adenosyl-L-methionine = N(6)-dimethyladenosine(1518)/N(6)-dimethyladenosine(1519) in 16S rRNA + 4 S-adenosyl-L-homocysteine + 4 H(+). In terms of biological role, specifically dimethylates two adjacent adenosines (A1518 and A1519) in the loop of a conserved hairpin near the 3'-end of 16S rRNA in the 30S particle. May play a critical role in biogenesis of 30S subunits. The sequence is that of Ribosomal RNA small subunit methyltransferase A from Prochlorococcus marinus (strain NATL2A).